Reading from the N-terminus, the 415-residue chain is Levansucrase (415 aa).

The sucrose site is built by W45, D46, A132, R202, and D203. The Nucleophile role is filled by D46. The Proton donor/acceptor role is filled by E287.

Belongs to the glycosyl hydrolase 68 family.

It is found in the secreted. It catalyses the reaction [6)-beta-D-fructofuranosyl-(2-&gt;](n) alpha-D-glucopyranoside + sucrose = [6)-beta-D-fructofuranosyl-(2-&gt;](n+1) alpha-D-glucopyranoside + D-glucose. Its function is as follows. Catalyzes the synthesis of levan, a fructose polymer, by transferring the fructosyl moiety from sucrose to a growing acceptor molecule. The polypeptide is Levansucrase (Erwinia amylovora (Fire blight bacteria)).